Consider the following 624-residue polypeptide: Sulfite reductase [ferredoxin] (624 aa).

The 3'-(S-cysteinyl)-tyrosine (Tyr-Cys) cross-link spans 52–137; it reads YQQDNRDNRV…ENLGSTISAC (86 aa). The [4Fe-4S] cluster site is built by cysteine 446, cysteine 452, cysteine 491, and cysteine 495. Residue cysteine 495 participates in siroheme binding.

This sequence belongs to the nitrite and sulfite reductase 4Fe-4S domain family. Monomer. It depends on siroheme as a cofactor. [4Fe-4S] cluster is required as a cofactor.

The catalysed reaction is hydrogen sulfide + 6 oxidized [2Fe-2S]-[ferredoxin] + 3 H2O = sulfite + 6 reduced [2Fe-2S]-[ferredoxin] + 7 H(+). Catalyzes the reduction of sulfite to sulfide, a step in the biosynthesis of sulfur-containing amino acids and cofactors. The protein is Sulfite reductase [ferredoxin] (sir) of Synechococcus elongatus (strain ATCC 33912 / PCC 7942 / FACHB-805) (Anacystis nidulans R2).